Here is a 436-residue protein sequence, read N- to C-terminus: UPF0597 protein YhaM (436 aa).

This sequence belongs to the UPF0597 family.

This is UPF0597 protein YhaM from Salmonella typhi.